A 500-amino-acid polypeptide reads, in one-letter code: Lysine--tRNA ligase (500 aa).

Mg(2+) is bound by residues Glu-410 and Glu-417.

The protein belongs to the class-II aminoacyl-tRNA synthetase family. In terms of assembly, homodimer. Mg(2+) is required as a cofactor.

It localises to the cytoplasm. It carries out the reaction tRNA(Lys) + L-lysine + ATP = L-lysyl-tRNA(Lys) + AMP + diphosphate. The protein is Lysine--tRNA ligase of Shewanella amazonensis (strain ATCC BAA-1098 / SB2B).